A 237-amino-acid chain; its full sequence is Uridylate kinase (237 aa).

Residue 11–14 (KLSG) coordinates ATP. The tract at residues 18–23 (GGGGIG) is involved in allosteric activation by GTP. Residue Gly-52 participates in UMP binding. Residues Gly-53 and Arg-57 each coordinate ATP. Residues Asp-72 and 133-140 (SGMPYFST) each bind UMP. Residues Gln-161, Tyr-167, and Asp-170 each contribute to the ATP site.

It belongs to the UMP kinase family. As to quaternary structure, homohexamer.

The protein resides in the cytoplasm. The enzyme catalyses UMP + ATP = UDP + ADP. It functions in the pathway pyrimidine metabolism; CTP biosynthesis via de novo pathway; UDP from UMP (UMPK route): step 1/1. Its activity is regulated as follows. Allosterically activated by GTP. Inhibited by UTP. In terms of biological role, catalyzes the reversible phosphorylation of UMP to UDP. The polypeptide is Uridylate kinase (Cutibacterium acnes (strain DSM 16379 / KPA171202) (Propionibacterium acnes)).